We begin with the raw amino-acid sequence, 426 residues long: Cell cycle checkpoint control protein RAD9B (426 aa).

At Ser-359 the chain carries Phosphoserine.

The protein belongs to the rad9 family. As to quaternary structure, interacts with HUS1, HUS1B, RAD1, RAD9A and RAD17. As to expression, expressed in testis and skeletal muscle.

This chain is Cell cycle checkpoint control protein RAD9B (RAD9B), found in Homo sapiens (Human).